Here is an 837-residue protein sequence, read N- to C-terminus: Tuftelin-interacting protein 11 (837 aa).

2 stretches are compositionally biased toward basic and acidic residues: residues 1 to 13 (MSLS…GEGR) and 53 to 64 (VWAERDSDDERP). Disordered stretches follow at residues 1–21 (MSLS…DDER), 53–72 (VWAE…KRAR), and 85–133 (LKKG…KGFA). The tract at residues 1–50 (MSLSHLYRDGEGRIDDDDDERENFEITDWDLQNEFNPNRQRHWQTKEEAT) is required for interaction with DHX15. Residues S2, S59, and S98 each carry the phosphoserine modification. Acidic residues predominate over residues 91-102 (EEAELEDSDDEE). Basic and acidic residues predominate over residues 103–116 (RPVKQDDFPKDFGP). S144 carries the post-translational modification Phosphoserine. The G-patch domain maps to 149-195 (TKGIGQKLLQKMGYVPGRGLGKNAQGIINPIEAKQRKGKGAVGAYGS). Residues 179-236 (IEAKQRKGKGAVGAYGSERTTQSMQDFPVVDSEEEAEEEFQKELSQWRKDPSGSKKKP) are disordered. S210 carries the post-translational modification Phosphoserine. Basic and acidic residues predominate over residues 217 to 231 (EFQKELSQWRKDPSG). Residues 700 to 705 (VKDKFN) carry the Nuclear localization signal motif. The tract at residues 710–734 (IMNRAVSSNVGAYMQPGARENIAYL) is required for nuclear speckle localization.

The protein belongs to the TFP11/STIP family. In terms of assembly, identified in the spliceosome C complex. Found in the Intron Large (IL) complex, a post-mRNA release spliceosomal complex containing the excised intron, U2, U5 and U6 snRNPs, and splicing factors. Interacts with TUFT1. Interacts with DHX15; indicative for a recruitment of DHX15 to the IL complex. Interacts with GCFC2.

The protein resides in the cytoplasm. It localises to the nucleus. Its function is as follows. Involved in pre-mRNA splicing, specifically in spliceosome disassembly during late-stage splicing events. Intron turnover seems to proceed through reactions in two lariat-intron associated complexes termed Intron Large (IL) and Intron Small (IS). In cooperation with DHX15 seems to mediate the transition of the U2, U5 and U6 snRNP-containing IL complex to the snRNP-free IS complex leading to efficient debranching and turnover of excised introns. May play a role in the differentiation of ameloblasts and odontoblasts or in the forming of the enamel extracellular matrix. The protein is Tuftelin-interacting protein 11 (TFIP11) of Macaca mulatta (Rhesus macaque).